A 129-amino-acid chain; its full sequence is uncharacterized protein (129 aa).

The Cytoplasmic portion of the chain corresponds to 1-28 (MAGTLFIILRFVDTTLPSSRVYCVRSLE). The helical transmembrane segment at 29 to 49 (VSVAVELAAATVLAFESIGVV) threads the bilayer. At 50–54 (DDCGR) the chain is on the extracellular side. A helical transmembrane segment spans residues 55–75 (SVLFSIILIAAFICSVFLIAS). At 76 to 129 (EDIAGSRRSTGSCVTLWEGRNISFCLYRSNWLNTVPVGYMFFLRKNRSLDERYF) the chain is on the cytoplasmic side.

It localises to the membrane. This is an uncharacterized protein from Saccharomyces cerevisiae (strain ATCC 204508 / S288c) (Baker's yeast).